Here is a 933-residue protein sequence, read N- to C-terminus: 2-oxoglutarate dehydrogenase E1 component (933 aa).

It belongs to the alpha-ketoglutarate dehydrogenase family. As to quaternary structure, homodimer. Part of the 2-oxoglutarate dehydrogenase (OGDH) complex composed of E1 (2-oxoglutarate dehydrogenase), E2 (dihydrolipoamide succinyltransferase) and E3 (dihydrolipoamide dehydrogenase); the complex contains multiple copies of the three enzymatic components (E1, E2 and E3). Interacts (via N-terminus) with SucB, the E2 component of OGDH complex. Thiamine diphosphate serves as cofactor.

It carries out the reaction N(6)-[(R)-lipoyl]-L-lysyl-[protein] + 2-oxoglutarate + H(+) = N(6)-[(R)-S(8)-succinyldihydrolipoyl]-L-lysyl-[protein] + CO2. E1 component of the 2-oxoglutarate dehydrogenase (OGDH) complex which catalyzes the decarboxylation of 2-oxoglutarate, the first step in the conversion of 2-oxoglutarate to succinyl-CoA and CO(2). This chain is 2-oxoglutarate dehydrogenase E1 component (sucA), found in Escherichia coli O157:H7.